The primary structure comprises 665 residues: E3 ubiquitin-protein ligase cblA (665 aa).

A disordered region spans residues 30–50 (NNNNNINNNNNNNNINSNNNG). The tract at residues 109 to 231 (TSLVNYIHYE…NNENNNNNNN (123 aa)) is 4H. The Cbl-PTB domain occupies 109–400 (TSLVNYIHYE…PDIFKSILSF (292 aa)). The interval 232–306 (NYNPYELLSN…FKLSVFIKWF (75 aa)) is EF-hand-like. Residues Asp287, Thr289, Asp291, and Tyr293 each contribute to the Ca(2+) site. The interval 307–400 (GALPVSLGIF…PDIFKSILSF (94 aa)) is SH2-like. 2 disordered regions span residues 437 to 456 (ENNNNQNNNQNNNNNNINTF) and 467 to 609 (DSSN…NNNN). Positions 467 to 478 (DSSNSSDTNKSP) are enriched in low complexity. Residues 479–544 (TKSRKSSFKN…NNNNNNNNNN (66 aa)) adopt a coiled-coil conformation. A compositionally biased stretch (basic and acidic residues) spans 486 to 512 (FKNDKDKKEKEKEKGKDKEKEKERVSD). 2 stretches are compositionally biased toward low complexity: residues 530 to 561 (NNNNNNNNNNNNNNNNNNNNNNNNNNSSNNNN) and 571 to 609 (TSNGSSGNNNNNNNNNNNNNNNNNNNNSSSTTKRNNNNN). An RING-type zinc finger spans residues 618 to 653 (CTVCMDNEINTVFLECGHLSCCSLCSVKLKKCPICR).

In terms of processing, ubiquitinated.

The protein resides in the cytoplasm. It is found in the nucleus. The catalysed reaction is S-ubiquitinyl-[E2 ubiquitin-conjugating enzyme]-L-cysteine + [acceptor protein]-L-lysine = [E2 ubiquitin-conjugating enzyme]-L-cysteine + N(6)-ubiquitinyl-[acceptor protein]-L-lysine.. It participates in protein modification; protein ubiquitination. Functionally, acts as an E3 ubiquitin-protein ligase, which accepts ubiquitin from specific E2 ubiquitin-conjugating enzymes, and then transfers it to substrates promoting their degradation by the proteasome. Up-regulates STATc tyrosine phosphorylation via an inhibitory effect on ptpC accumulation. Recognizes activated receptor tyrosine kinases, RTKs and terminates signaling. The chain is E3 ubiquitin-protein ligase cblA (cblA-1) from Dictyostelium discoideum (Social amoeba).